A 145-amino-acid polypeptide reads, in one-letter code: MANAEKTSSGSDIDEKKRKRKLSNRESARRSRLKKQKLMEDTIHEISSLERRIKENSERCRAVKQRLDSVETENAGLRSEKIWLSSYVSDLENMIATTSLTLTQSGGGDCVDDQNANAGIAVGDCRRTPWKLSCGSLQPMASFKT.

The segment covering 1–11 (MANAEKTSSGS) has biased composition (polar residues). A disordered region spans residues 1-39 (MANAEKTSSGSDIDEKKRKRKLSNRESARRSRLKKQKLM). The region spanning 14–77 (DEKKRKRKLS…DSVETENAGL (64 aa)) is the bZIP domain. Residues 16–37 (KKRKRKLSNRESARRSRLKKQK) are basic motif. The segment at 46-53 (ISSLERRI) is leucine-zipper.

This sequence belongs to the bZIP family. Interacts with ZFP7, BZIP4, BZIP9, BZIP10, BZIP11, BZIP25, BZIP42, BZIP44, BZIP53, BZIP58 and BZIP63. As to expression, expressed in both shoots, including young leaves, stipulae and trichomes (except in cotyledons and hypocotyl), and roots, including vascular tissues (e.g. in both the phloem and the xylem). Present in seeds and pollen. Restricted to vasculatures and roots in the presence of sucrose or glucose.

The protein resides in the nucleus. In terms of biological role, transcription factor that binds to the C-box-like motif (5'-TGCTGACGTCA-3') and G-box-like motif (5'-CCACGTGGCC-3'), ABRE elements, of gene promoters involved in sugar signaling. Activated by low energy stress both at transcriptional and post-transcriptional mechanisms. Promotes dark-induced senescence and participates in the transcriptional reprogramming of amino acid metabolism during the dark-induced starvation response. Transcription activator of the mannan synthase CSLA9. Recognizes and binds to DNA-specific sequence of CSLA9 promoter. This Arabidopsis thaliana (Mouse-ear cress) protein is Basic leucine zipper 1 (BZIP1).